The sequence spans 262 residues: Sulfur carrier protein FdhD (262 aa).

Cysteine 105 (cysteine persulfide intermediate) is an active-site residue. 246 to 251 (FVRKNR) contacts Mo-bis(molybdopterin guanine dinucleotide).

Belongs to the FdhD family.

Its subcellular location is the cytoplasm. Required for formate dehydrogenase (FDH) activity. Acts as a sulfur carrier protein that transfers sulfur from IscS to the molybdenum cofactor prior to its insertion into FDH. The sequence is that of Sulfur carrier protein FdhD from Picrophilus torridus (strain ATCC 700027 / DSM 9790 / JCM 10055 / NBRC 100828 / KAW 2/3).